The chain runs to 324 residues: MTSTGSTRYDGDSWDLASSVGVTATMVAAARAMATRAENPLINDPYAEPLVRAVGVDLLTRLATGEFNVADLDDDPQRPLGPIGDVADNMAVRTRFFDDFFLAATRAGLEQVVILASGRDARAYRLPWPPQTVVYEIDLPQVIDFKSRTLADLGAAPTADRRVVAVDLREDWPAALRAAGFDPNQPTAWSAEGLLGYLPPEAQDRLLDTVTELSAPGSRLAAECLSGVDPAEEEQIKERMQEVSARWRAHGFDVDMVGLVYFGDRNEAVPYLSDRGWLLTSTPLPELRAANGLAPAAVDDDGPSVDMLYVSGTLYTTPRPDPAP.

S-adenosyl-L-methionine is bound by residues D138 and 167 to 168; that span reads DL.

Belongs to the UPF0677 family.

Its function is as follows. Exhibits S-adenosyl-L-methionine-dependent methyltransferase activity. In Mycobacterium ulcerans (strain Agy99), this protein is Putative S-adenosyl-L-methionine-dependent methyltransferase MUL_0818.